The sequence spans 144 residues: UPF0178 protein Exig_1155 (144 aa).

A disordered region spans residues 110-144; sequence IRRAGGRTKGPKKRTRQEDASFEQSFSRLLTEKTD. Residues 113–124 are compositionally biased toward basic residues; sequence AGGRTKGPKKRT.

Belongs to the UPF0178 family.

This chain is UPF0178 protein Exig_1155, found in Exiguobacterium sibiricum (strain DSM 17290 / CCUG 55495 / CIP 109462 / JCM 13490 / 255-15).